The chain runs to 190 residues: Ubiquinol-cytochrome c reductase iron-sulfur subunit (190 aa).

Residues 18-39 (FLYYATAGAGTVAAGAAAWTLV) traverse the membrane as a helical segment. One can recognise a Rieske domain in the interval 95 to 188 (GQLIDRSAQN…AEFLDDTTIK (94 aa)). Positions 132, 134, 152, and 155 each coordinate [2Fe-2S] cluster. C137 and C154 are joined by a disulfide.

It belongs to the Rieske iron-sulfur protein family. The main subunits of complex b-c1 are: cytochrome b, cytochrome c1 and the Rieske protein. Requires [2Fe-2S] cluster as cofactor.

Its subcellular location is the cell membrane. The catalysed reaction is a quinol + 2 Fe(III)-[cytochrome c](out) = a quinone + 2 Fe(II)-[cytochrome c](out) + 2 H(+)(out). Component of the ubiquinol-cytochrome c reductase complex (complex III or cytochrome b-c1 complex), which is a respiratory chain that generates an electrochemical potential coupled to ATP synthesis. The sequence is that of Ubiquinol-cytochrome c reductase iron-sulfur subunit (petA) from Paracoccus denitrificans.